Reading from the N-terminus, the 250-residue chain is Tripartite motif-containing protein 74 (250 aa).

The segment at 16 to 57 (CPICLEVFKESLMLQCGHSYCKGCLVSLSYHLDTKVRCPMCW) adopts an RING-type zinc-finger fold. The B box-type zinc-finger motif lies at 84–125 (PEPKVCVHHRNPLSLFCEKDQELICGLCGLLGSHQHHPVTPV). Zn(2+) contacts are provided by cysteine 89, histidine 92, cysteine 111, and histidine 117. Coiled coils occupy residues 125-169 (VSTV…NESD) and 204-235 (LVAS…FGNE).

The protein belongs to the TRIM/RBCC family.

This Homo sapiens (Human) protein is Tripartite motif-containing protein 74 (TRIM74).